Consider the following 1160-residue polypeptide: DNA polymerase III subunit alpha (1160 aa).

It belongs to the DNA polymerase type-C family. DnaE subfamily. As to quaternary structure, the DNA polymerase III holoenzyme complex contains at least 10 different subunits organized into 3 functionally essential subassemblies: the Pol III core, the beta sliding clamp processivity factor and the clamp-loading complex. The Pol III core (subunits alpha, epsilon and theta) contains the polymerase and the 3'-5' exonuclease proofreading activities. The polymerase is tethered to the template via the dimeric beta sliding clamp processivity factor. The clamp loader (also called gamma complex) assembles the beta sliding clamp onto the primed template and plays a central role in the organization and communication at the replication fork. The clamp-loading complex contains delta, delta', psi and chi, and 3 copies of either or both of two different DnaX proteins, gamma and tau. The DNA replisome complex has a single clamp loader (3 tau and 1 each of delta, delta', psi and chi subunits) which binds 3 Pol III cores (1 core on the leading strand and 2 on the lagging strand) each with a beta sliding clamp dimer. Additional proteins in the replisome are other copies of gamma, psi and chi, Ssb, DNA helicase and RNA primase. Interacts with the beta sliding-clamp subunit via the peptide Gln-Ala-Asp-Met-Phe (residues 920-924).

The protein localises to the cytoplasm. It catalyses the reaction DNA(n) + a 2'-deoxyribonucleoside 5'-triphosphate = DNA(n+1) + diphosphate. Functionally, DNA polymerase III is a complex, multichain enzyme responsible for most of the replicative synthesis in bacteria. This DNA polymerase also exhibits 3' to 5' exonuclease activity. The alpha chain is the DNA polymerase catalytic subunit. It is tethered to replicating DNA by the beta sliding clamp (dnaN), which confers extremely high processivity to the catalytic subunit, copying a 5.4 kb genome in 11 seconds, a speed of at least 500 nucleotides/second at 30 degrees Celsius. The sequence is that of DNA polymerase III subunit alpha (dnaE) from Escherichia coli (strain K12).